The primary structure comprises 186 residues: Peptidyl-tRNA hydrolase (186 aa).

Tyr-14 provides a ligand contact to tRNA. The active-site Proton acceptor is His-19. Tyr-61, Asn-63, and Asn-107 together coordinate tRNA.

It belongs to the PTH family. In terms of assembly, monomer.

The protein resides in the cytoplasm. The catalysed reaction is an N-acyl-L-alpha-aminoacyl-tRNA + H2O = an N-acyl-L-amino acid + a tRNA + H(+). Its function is as follows. Hydrolyzes ribosome-free peptidyl-tRNAs (with 1 or more amino acids incorporated), which drop off the ribosome during protein synthesis, or as a result of ribosome stalling. In terms of biological role, catalyzes the release of premature peptidyl moieties from peptidyl-tRNA molecules trapped in stalled 50S ribosomal subunits, and thus maintains levels of free tRNAs and 50S ribosomes. The polypeptide is Peptidyl-tRNA hydrolase (Helicobacter pylori (strain P12)).